Here is a 62-residue protein sequence, read N- to C-terminus: Large ribosomal subunit protein uL29 (62 aa).

It belongs to the universal ribosomal protein uL29 family.

This Geotalea daltonii (strain DSM 22248 / JCM 15807 / FRC-32) (Geobacter daltonii) protein is Large ribosomal subunit protein uL29.